Reading from the N-terminus, the 148-residue chain is Large ribosomal subunit protein bL9 (148 aa).

Belongs to the bacterial ribosomal protein bL9 family.

In terms of biological role, binds to the 23S rRNA. The polypeptide is Large ribosomal subunit protein bL9 (Sulfurimonas denitrificans (strain ATCC 33889 / DSM 1251) (Thiomicrospira denitrificans (strain ATCC 33889 / DSM 1251))).